A 104-amino-acid chain; its full sequence is L-rhamnose mutarotase (104 aa).

Tyrosine 18 contacts substrate. Residue histidine 22 is the Proton donor of the active site. Residues tyrosine 41 and 76 to 77 (WW) contribute to the substrate site.

This sequence belongs to the rhamnose mutarotase family. Homodimer.

Its subcellular location is the cytoplasm. The enzyme catalyses alpha-L-rhamnose = beta-L-rhamnose. The protein operates within carbohydrate metabolism; L-rhamnose metabolism. In terms of biological role, involved in the anomeric conversion of L-rhamnose. The sequence is that of L-rhamnose mutarotase from Listeria monocytogenes serotype 4b (strain F2365).